The chain runs to 89 residues: Small ribosomal subunit protein uS15 (89 aa).

This sequence belongs to the universal ribosomal protein uS15 family. In terms of assembly, part of the 30S ribosomal subunit. Forms a bridge to the 50S subunit in the 70S ribosome, contacting the 23S rRNA.

Its function is as follows. One of the primary rRNA binding proteins, it binds directly to 16S rRNA where it helps nucleate assembly of the platform of the 30S subunit by binding and bridging several RNA helices of the 16S rRNA. Functionally, forms an intersubunit bridge (bridge B4) with the 23S rRNA of the 50S subunit in the ribosome. This Mycobacteroides abscessus (strain ATCC 19977 / DSM 44196 / CCUG 20993 / CIP 104536 / JCM 13569 / NCTC 13031 / TMC 1543 / L948) (Mycobacterium abscessus) protein is Small ribosomal subunit protein uS15.